We begin with the raw amino-acid sequence, 320 residues long: MQTRNAFSCIKEGITRSISISIMIYIIIRAPISNAYPIFAQQGYENPREATGRIVCANCHLANKPVDIEVPQAVLPDTVFEAVVRIPYDMQVKQVLANGKKGALNVGAVLILPEGFELAPPDRISPEIKEKIGNLSFQNYRPTKKNILVVGPVPGQKYKEITFPILSPDPTTKRDVHFLKYPIYVGGNRGRGQIYLDGSKSNNNVYNATAAGMVKKIIRKEKGGYEITIVDALDGREVIDIIPPGPELLVSEGESIKLDQPLTSNPNVGGFGQGDAEIVLQDPLRVQGLLFFFASIILAQIFLVLKKKQFEKVQLSEMNF.

The N-terminal stretch at 1–35 (MQTRNAFSCIKEGITRSISISIMIYIIIRAPISNA) is a signal peptide. Residues Y36, C56, C59, and H60 each coordinate heme. A helical membrane pass occupies residues 286–305 (VQGLLFFFASIILAQIFLVL).

It belongs to the cytochrome f family. As to quaternary structure, the 4 large subunits of the cytochrome b6-f complex are cytochrome b6, subunit IV (17 kDa polypeptide, petD), cytochrome f and the Rieske protein, while the 4 small subunits are PetG, PetL, PetM and PetN. The complex functions as a dimer. Heme serves as cofactor.

It is found in the plastid. Its subcellular location is the chloroplast thylakoid membrane. In terms of biological role, component of the cytochrome b6-f complex, which mediates electron transfer between photosystem II (PSII) and photosystem I (PSI), cyclic electron flow around PSI, and state transitions. This is Cytochrome f (petA) from Glycine max (Soybean).